The chain runs to 1420 residues: Apolipoprotein(a) (1420 aa).

The span at 19–30 shows a compositional bias: low complexity; sequence TAVAPPNVTPVP. Residues 19 to 46 form a disordered region; the sequence is TAVAPPNVTPVPSLEAPSEQAPTEQRPG. Kringle domains are found at residues 49-127, 163-241, 277-355, 391-469, and 505-583; these read ECYH…LTQC, ECYH…LTRC, and ECYY…LTQC. 15 cysteine pairs are disulfide-bonded: Cys-50/Cys-127, Cys-71/Cys-110, Cys-99/Cys-122, Cys-164/Cys-241, Cys-185/Cys-224, Cys-213/Cys-236, Cys-278/Cys-355, Cys-299/Cys-338, Cys-327/Cys-350, Cys-392/Cys-469, Cys-413/Cys-452, Cys-441/Cys-464, Cys-506/Cys-583, Cys-527/Cys-566, and Cys-555/Cys-578. Residues 598–617 are disordered; that stretch reads PDPSTQASSEEAPTEQSPEV. Polar residues predominate over residues 600 to 616; that stretch reads PSTQASSEEAPTEQSPE. Kringle domains are found at residues 619-697, 725-803, 839-917, 953-1031, and 1067-1145; these read DCYH…LTQC, DCYQ…LTQC, and QCYH…LTRC. Cystine bridges form between Cys-620–Cys-697, Cys-641–Cys-680, Cys-669–Cys-692, Cys-726–Cys-803, Cys-747–Cys-786, Cys-775–Cys-798, Cys-840–Cys-917, Cys-861–Cys-900, Cys-889–Cys-912, Cys-954–Cys-1031, Cys-975–Cys-1014, Cys-1003–Cys-1026, Cys-1068–Cys-1145, Cys-1089–Cys-1128, Cys-1117–Cys-1140, Cys-1217–Cys-1233, Cys-1309–Cys-1376, Cys-1339–Cys-1355, and Cys-1366–Cys-1394. Positions 1191–1418 constitute a Peptidase S1 domain; that stretch reads IVGGCVAHPH…FVTWIEGVMR (228 aa).

Belongs to the peptidase S1 family. Plasminogen subfamily. Disulfide-linked to apo-B100. Binds to fibronectin and decorin. In terms of processing, N- and O-glycosylated.

Its function is as follows. Apo(a) is the main constituent of lipoprotein(a) (Lp(a)). It has serine proteinase activity and is able of autoproteolysis. Inhibits tissue-type plasminogen activator 1. Lp(a) may be a ligand for megalin/Gp 330. In Macaca mulatta (Rhesus macaque), this protein is Apolipoprotein(a) (LPA).